The sequence spans 1993 residues: [F-actin]-monooxygenase MICAL3 (1993 aa).

A monooxygenase domain region spans residues 2 to 494 (EERKQETTNQ…RHLYDSGETK (493 aa)). Residues cysteine 97, 116–118 (EKR), 123–125 (RNN), phenylalanine 183, tyrosine 298, and aspartate 398 each bind FAD. One can recognise a Calponin-homology (CH) domain in the interval 518–624 (VARSSKLLGW…YLTQFYEMFK (107 aa)). At serine 649 the chain carries Phosphoserine. The tract at residues 658–704 (GQTISRKRSPKDKKEKDSDGAGKRRKTSQSEEEEPPRSYKGERPTLV) is disordered. The span at 669 to 679 (DKKEKDSDGAG) shows a compositional bias: basic and acidic residues. A phosphoserine mark is found at serine 685 and serine 687. In terms of domain architecture, LIM zinc-binding spans 762–824 (DTCYFCQKRV…KPHYCYRLSG (63 aa)). Zn(2+) contacts are provided by cysteine 764, cysteine 767, histidine 785, cysteine 788, cysteine 791, cysteine 794, cysteine 814, and histidine 817. Residues 854–886 (NGLASVAASSAERSPGTSMNGLEEPSIAKRLRG) are disordered. The segment covering 860-873 (AASSAERSPGTSMN) has biased composition (polar residues). Threonine 887 bears the Phosphothreonine mark. Disordered regions lie at residues 905–1023 (ELEE…RLQQ), 1039–1309 (WTHI…LSGP), 1332–1546 (IRRS…FFTP), and 1559–1837 (KENG…EELK). The span at 938 to 951 (SEMEEEEEEDDEDD) shows a compositional bias: acidic residues. Residues 975-988 (GRSEEELEASKNFE) are compositionally biased toward basic and acidic residues. Phosphoserine is present on serine 977. A compositionally biased stretch (acidic residues) spans 989–1014 (PEEEEEEEEYEEEDEEYEEEEEEESS). A compositionally biased stretch (basic and acidic residues) spans 1039 to 1051 (WTHIREREAEERM). The span at 1065–1090 (DEDDLEEDADSEPAETEGEAAEDGDP) shows a compositional bias: acidic residues. The segment covering 1111–1148 (EAEHRLQSQAKVKAELELRVSENEEEKPSDAPKQEERG) has biased composition (basic and acidic residues). Phosphoserine is present on residues serine 1131 and serine 1187. Positions 1199 to 1212 (LREKPKAEVPEEQK) are enriched in basic and acidic residues. A compositionally biased stretch (polar residues) spans 1230-1239 (SPTSPTSLQP). The segment covering 1245–1255 (PPTPPTPPPTQ) has biased composition (pro residues). Over residues 1257 to 1275 (PICSQPQPSSDASIPSPTK) the composition is skewed to polar residues. Serine 1272 carries the phosphoserine modification. Threonine 1274 carries the phosphothreonine modification. Phosphoserine is present on residues serine 1276 and serine 1335. Position 1339 is a phosphothreonine (threonine 1339). A phosphoserine mark is found at serine 1369 and serine 1382. The segment covering 1405-1420 (PSDKELRSSQEERRDL) has biased composition (basic and acidic residues). The span at 1421–1433 (SSSSGLGLHDSSS) shows a compositional bias: low complexity. Serine 1431 is modified (phosphoserine). Residues 1434–1452 (NMKTLGSQSFNTSDSTMLT) show a composition bias toward polar residues. Threonine 1452 is modified (phosphothreonine). Pro residues predominate over residues 1454–1465 (PSSPPPPPPPNE). Residues 1516-1530 (SVDEIPFADDVEDTY) show a composition bias toward acidic residues. Basic and acidic residues predominate over residues 1584–1600 (EAKELAEERMRAREKSV). The span at 1623-1633 (SSRSHTAQSQG) shows a compositional bias: polar residues. Phosphoserine is present on serine 1640. Over residues 1665–1685 (SPPSDSGGPDGSVTSSEGSSG) the composition is skewed to low complexity. The segment covering 1686 to 1704 (KSKKRSSLFSPRRNKKEKK) has biased composition (basic residues). Phosphoserine is present on residues serine 1692 and serine 1695. Over residues 1754–1763 (TPSSGATVDS) the composition is skewed to polar residues. Residues 1795-1811 (ILERSSQKSKREPRTYT) are compositionally biased toward basic and acidic residues. Residues 1817–1983 (AKLTRRVQKA…EEDKDLEAAM (167 aa)) adopt a coiled-coil conformation. Over residues 1819-1830 (LTRRVQKAARRQ) the composition is skewed to basic residues. In terms of domain architecture, bMERB spans 1832 to 1981 (KQEELKRLHR…EKEEDKDLEA (150 aa)). A Phosphoserine modification is found at serine 1903.

This sequence belongs to the Mical family. As to quaternary structure, interacts with RAB1B, RAB8A, RAB10, RAB13 and RAB15 (in their GTP-bound forms); binding to RAB1B is of low affinity compared to other Rab proteins; at least in case of RAB8A can bind 2 molecules of RAB8A simultaneously through a high and a low affinity binding site, respectively. Interacts with ERC1 and RAB8A; may bridge ERC1 with RAB8A. Interacts with KIF23 and ERC1; enhances the interaction between KIF23 and ERC1. Interacts with NINL. FAD is required as a cofactor.

It is found in the cytoplasm. It localises to the cell cortex. Its subcellular location is the cytoskeleton. The protein resides in the nucleus. The protein localises to the midbody. It is found in the spindle. It localises to the cilium basal body. It carries out the reaction L-methionyl-[F-actin] + NADPH + O2 + H(+) = L-methionyl-(R)-S-oxide-[F-actin] + NADP(+) + H2O. In terms of biological role, monooxygenase that promotes depolymerization of F-actin by mediating oxidation of specific methionine residues on actin to form methionine-sulfoxide, resulting in actin filament disassembly and preventing repolymerization. In the absence of actin, it also functions as a NADPH oxidase producing H(2)O(2). Seems to act as Rab effector protein and play a role in vesicle trafficking. Involved in exocytic vesicles tethering and fusion: the monooxygenase activity is required for this process and implicates RAB8A associated with exocytotic vesicles. Required for cytokinesis. Contributes to stabilization and/or maturation of the intercellular bridge independently of its monooxygenase activity. Promotes recruitment of Rab8 and ERC1 to the intercellular bridge, and together these proteins are proposed to function in timely abscission. In Mus musculus (Mouse), this protein is [F-actin]-monooxygenase MICAL3 (Mical3).